The following is a 409-amino-acid chain: Tryptophan synthase beta chain (409 aa).

N6-(pyridoxal phosphate)lysine is present on lysine 92.

Belongs to the TrpB family. Tetramer of two alpha and two beta chains. The cofactor is pyridoxal 5'-phosphate.

It catalyses the reaction (1S,2R)-1-C-(indol-3-yl)glycerol 3-phosphate + L-serine = D-glyceraldehyde 3-phosphate + L-tryptophan + H2O. It functions in the pathway amino-acid biosynthesis; L-tryptophan biosynthesis; L-tryptophan from chorismate: step 5/5. The beta subunit is responsible for the synthesis of L-tryptophan from indole and L-serine. The polypeptide is Tryptophan synthase beta chain (trpB) (Methanococcus voltae).